A 941-amino-acid chain; its full sequence is Isoleucine--tRNA ligase (941 aa).

The short motif at Pro-58–His-68 is the 'HIGH' region element. Glu-563 contributes to the L-isoleucyl-5'-AMP binding site. A 'KMSKS' region motif is present at residues Lys-604 to Ser-608. Lys-607 lines the ATP pocket. Residues Cys-904, Cys-907, Cys-924, and Cys-927 each coordinate Zn(2+).

The protein belongs to the class-I aminoacyl-tRNA synthetase family. IleS type 1 subfamily. As to quaternary structure, monomer. Zn(2+) is required as a cofactor.

Its subcellular location is the cytoplasm. The enzyme catalyses tRNA(Ile) + L-isoleucine + ATP = L-isoleucyl-tRNA(Ile) + AMP + diphosphate. Functionally, catalyzes the attachment of isoleucine to tRNA(Ile). As IleRS can inadvertently accommodate and process structurally similar amino acids such as valine, to avoid such errors it has two additional distinct tRNA(Ile)-dependent editing activities. One activity is designated as 'pretransfer' editing and involves the hydrolysis of activated Val-AMP. The other activity is designated 'posttransfer' editing and involves deacylation of mischarged Val-tRNA(Ile). This is Isoleucine--tRNA ligase from Halorhodospira halophila (strain DSM 244 / SL1) (Ectothiorhodospira halophila (strain DSM 244 / SL1)).